The primary structure comprises 84 residues: Hydramacin-1 (84 aa).

Residues 1–24 (MRTVVFFILVSIFLVALKPTGTQA) form the signal peptide. Gln-25 bears the Pyrrolidone carboxylic acid mark. 4 cysteine pairs are disulfide-bonded: Cys-29–Cys-72, Cys-36–Cys-65, Cys-51–Cys-81, and Cys-55–Cys-83.

As to expression, expressed in the endodermal epithelium.

It is found in the secreted. The protein localises to the target cell membrane. Functionally, cationic antimicrobial peptide potently active against Gram-positive and Gram-negative bacteria including multi-resistant human pathogenic strains. Is not active against the Gram-positive Coccus species, Gram-negative non-fermentation species and against the fungus C.albicans. It leads to aggregation of bacteria as an initial step of its bactericidal mechanism. Aggregated cells are connected via electron-dense contacts and adopt a thorn apple-like morphology. Hydramycin contains a belt of positively charged residues that separate two hydrophobic areas. This structure may explain the observed aggregation of bacteria, since each of these areas can immerse into the outer leaflets of the membranes of two individual bacteria. Is able to permeabilize membranes of viable bacteria at low and neutral pH values, but no pore-forming activity is not detected. The protein is Hydramacin-1 of Hydra vulgaris (Hydra).